The primary structure comprises 266 residues: Early E1A protein (266 aa).

The interaction with RB1 in competition with E2F1 stretch occupies residues 39–47; it reads MSLHEMYDL. Residues 94 to 98 carry the PXLXP motif, interaction with host ZMYND11 motif; that stretch reads PELQP. The LXCXE motif, interaction with host RB1 motif lies at 103 to 107; it reads LFCYE. A zinc finger lies at 160 to 180; sequence CSSCDYHRKTSGCPEILCSLC. A disordered region spans residues 193–244; sequence VSDSEPDEPDSTTADSNHGSPPTLRCTPPRDLPRPVPVKASPGKRPAVNSLH. The span at 203–212 shows a compositional bias: polar residues; it reads STTADSNHGS. The short motif at 255–259 is the PXDLS motif, CTBP-binding element; sequence PLDLS. Residues 261 to 265 carry the Nuclear localization signal motif; the sequence is KRSRS.

The protein belongs to the adenoviridae E1A protein family. Interacts with host UBE2I; this interaction interferes with polySUMOylation. Interacts with host RB1; this interaction induces the aberrant dissociation of RB1-E2F1 complex thereby disrupting the activity of RB1 and activating E2F1-regulated genes. Interacts with host ATF7; the interaction enhances ATF7-mediated viral transactivation activity which requires the zinc binding domains of both proteins. Isoform early E1A 32 kDa protein and isoform early E1A 26 kDa protein interact (via N-terminus) with CUL1 and E3 ubiquitin ligase RBX1; these interactions inhibit RBX1-CUL1-dependent elongation reaction of ubiquitin chains and attenuate ubiquitination of SCF(FBXW7) target proteins. Interacts (via PXLXP motif) with host ZMYND11/BS69 (via MYND-type zinc finger); this interaction inhibits E1A mediated transactivation. Interacts with host EP300; this interaction stimulates the acetylation of RB1 by recruiting EP300 and RB1 into a multimeric-protein complex. Interacts with host CTBP1 and CTBP2; this interaction seems to potentiate viral replication. Interacts with host DCAF7. Interacts with host DYRK1A. Interacts with host KPNA4; this interaction allows E1A import into the host nucleus. Interacts with host EP400; this interaction stabilizes MYC. Interacts with host TBP protein; this interaction probably disrupts the TBP-TATA complex.

The protein resides in the host nucleus. In terms of biological role, plays a role in viral genome replication by driving entry of quiescent cells into the cell cycle. Stimulation of progression from G1 to S phase allows the virus to efficiently use the cellular DNA replicating machinery to achieve viral genome replication. E1A protein has both transforming and trans-activating activities. Induces the disassembly of the E2F1 transcription factor from RB1 by direct competition for the same binding site on RB1, with subsequent transcriptional activation of E2F1-regulated S-phase genes and of the E2 region of the adenoviral genome. Release of E2F1 leads to the ARF-mediated inhibition of MDM2 and causes TP53/p53 to accumulate because it is not targeted for degradation by MDM2-mediated ubiquitination anymore. This increase in TP53, in turn, would arrest the cell proliferation and direct its death but this effect is counteracted by the viral protein E1B-55K. Inactivation of the ability of RB1 to arrest the cell cycle is critical for cellular transformation, uncontrolled cellular growth and proliferation induced by viral infection. Interaction with RBX1 and CUL1 inhibits ubiquitination of the proteins targeted by SCF(FBXW7) ubiquitin ligase complex, and may be linked to unregulated host cell proliferation. The tumorigenesis-restraining activity of E1A may be related to the disruption of the host CtBP-CtIP complex through the CtBP binding motif. In Simian adenovirus serotype 7 (SAdV-7), this protein is Early E1A protein.